A 292-amino-acid polypeptide reads, in one-letter code: DCN1-like protein 4 (292 aa).

Residues 43–83 (HQTGSLRSCSSSDCFNKVMPPRKKRRPASGDDLSAKKSRHD) are disordered. The segment covering 45–56 (TGSLRSCSSSDC) has biased composition (polar residues). A Glycyl lysine isopeptide (Lys-Gly) (interchain with G-Cter in SUMO2) cross-link involves residue lysine 95. The DCUN1 domain occupies 101-287 (FSSKRCLEWF…LLDEFVEWYK (187 aa)).

In terms of assembly, interacts (via the DCUN1 domain) with the unneddylated cullins: interacts with CUL1, CUL2, CUL3, CUL4A, CUL4B and CUL5; these interactions promote the cullin neddylation and the identity of the cullin dictates the affinity of the interaction. Interacts with RBX1 and RNF7. Interacts with CAND1; this interaction is bridged by cullins such as CUL3 and strongly inhibits the neddylation of CUL3. These CAND-cullin-DCNL complexes can only be neddylated in the presence of a substrate adapter. Interacts (via DCUN1 domain) with UBE2M (N-terminally acetylated form) and probably with UBE2F (N-terminally acetylated form).

The protein localises to the nucleus. In terms of biological role, contributes to the neddylation of all cullins by transferring NEDD8 from N-terminally acetylated NEDD8-conjugating E2s enzyme to different cullin C-terminal domain-RBX complexes which are necessary for the activation of cullin-RING E3 ubiquitin ligases (CRLs). The sequence is that of DCN1-like protein 4 from Homo sapiens (Human).